The primary structure comprises 87 residues: Small ribosomal subunit protein bS21m (87 aa).

It belongs to the bacterial ribosomal protein bS21 family. As to quaternary structure, component of the mitochondrial ribosome small subunit (28S) which comprises a 12S rRNA and about 30 distinct proteins.

It is found in the mitochondrion. The polypeptide is Small ribosomal subunit protein bS21m (Mrps21) (Mus musculus (Mouse)).